Reading from the N-terminus, the 332-residue chain is Ferredoxin--NADP reductase (332 aa).

FAD contacts are provided by Glu-35, Gln-43, Tyr-48, Val-88, Phe-122, Asp-286, and Ser-326.

The protein belongs to the ferredoxin--NADP reductase type 2 family. Homodimer. FAD is required as a cofactor.

It catalyses the reaction 2 reduced [2Fe-2S]-[ferredoxin] + NADP(+) + H(+) = 2 oxidized [2Fe-2S]-[ferredoxin] + NADPH. This chain is Ferredoxin--NADP reductase, found in Limosilactobacillus reuteri (strain DSM 20016) (Lactobacillus reuteri).